A 32-amino-acid chain; its full sequence is Cytochrome b6-f complex subunit 6 (32 aa).

A helical transmembrane segment spans residues 4-26 (ITSYVGLLFTALGFTLGLYFGLT).

The protein belongs to the PetL family. As to quaternary structure, the 4 large subunits of the cytochrome b6-f complex are cytochrome b6, subunit IV (17 kDa polypeptide, PetD), cytochrome f and the Rieske protein, while the 4 small subunits are PetG, PetL, PetM and PetN. The complex functions as a dimer.

Its subcellular location is the plastid. It localises to the chloroplast thylakoid membrane. Its function is as follows. Component of the cytochrome b6-f complex, which mediates electron transfer between photosystem II (PSII) and photosystem I (PSI), cyclic electron flow around PSI, and state transitions. PetL is important for photoautotrophic growth as well as for electron transfer efficiency and stability of the cytochrome b6-f complex. This is Cytochrome b6-f complex subunit 6 from Tetradesmus obliquus (Green alga).